Consider the following 266-residue polypeptide: Nitrate import ATP-binding protein NrtD (266 aa).

The ABC transporter domain maps to 3 to 234 (LEITDLNRVF…DEETPKNRTY (232 aa)). 39–46 (GASGSGKS) contributes to the ATP binding site.

It belongs to the ABC transporter superfamily. Nitrate/nitrite/cyanate uptake transporter (NitT) (TC 3.A.1.16) family. In terms of assembly, the complex is composed of two ATP-binding proteins (NrtC and NrtD), two transmembrane proteins (NrtB) and a solute-binding protein (NrtA).

Its subcellular location is the cell inner membrane. The catalysed reaction is nitrate(out) + ATP + H2O = nitrate(in) + ADP + phosphate + H(+). Functionally, part of the ABC transporter complex NrtABCD involved in nitrate uptake. The complex is probably also involved in nitrite transport. Probably responsible for energy coupling to the transport system. This is Nitrate import ATP-binding protein NrtD (nrtD) from Synechocystis sp. (strain ATCC 27184 / PCC 6803 / Kazusa).